A 352-amino-acid chain; its full sequence is Maleylacetate reductase (352 aa).

It belongs to the iron-containing alcohol dehydrogenase family.

The catalysed reaction is 3-oxoadipate + NAD(+) = maleylacetate + NADH + H(+). It catalyses the reaction 3-oxoadipate + NADP(+) = maleylacetate + NADPH + H(+). It participates in aromatic compound metabolism; 3-chlorocatechol degradation. This chain is Maleylacetate reductase (clcE), found in Pseudomonas knackmussii (strain DSM 6978 / CCUG 54928 / LMG 23759 / B13).